The sequence spans 275 residues: Photosystem II extrinsic protein O (275 aa).

A signal peptide spans 1–28 (MRFRTLLIAFLALCLGLITACSEGPANA).

It belongs to the PsbO family. PSII is composed of 1 copy each of membrane proteins PsbA, PsbB, PsbC, PsbD, PsbE, PsbF, PsbH, PsbI, PsbJ, PsbK, PsbL, PsbM, PsbT, PsbX, PsbY, PsbZ, Psb30/Ycf12, peripheral proteins PsbO, CyanoQ (PsbQ), PsbU, PsbV and a large number of cofactors. It forms dimeric complexes.

It is found in the cellular thylakoid membrane. Its function is as follows. One of the extrinsic, lumenal subunits of photosystem II (PSII), which stabilize and protect the oxygen-evolving complex. PSII is a light-driven water plastoquinone oxidoreductase, using light energy to abstract electrons from H(2)O, generating a proton gradient subsequently used for ATP formation. Required for dimerization of PSII and for binding of PsbQ to PSII. This Crocosphaera subtropica (strain ATCC 51142 / BH68) (Cyanothece sp. (strain ATCC 51142)) protein is Photosystem II extrinsic protein O.